We begin with the raw amino-acid sequence, 481 residues long: MTAIETKRIGSITQIIGPVLDAKFPPGQMPNIYNALIVKAKNEAGEDLSVTCEVQQLLGDNQVRAVAMSATDGLMRGLEILDTGAPLSVPVGEITLGRIFNVLGEPVDGLGDVVAKTKSPIHRNSPTFIELDTKLSIFETGIKVVDLLAPYRRGGKIGLFGGAGVGKTVLIMELINNIAKAHGGVSVFGGVGERTREGNDLYMEMKESKVINEENLSSSKVALVYGQMNEPPGARMRVGLTALTMAEYFRDVNNQDVLLFIDNIFRFVQAGSEVSALLGRMPSAVGYQPTLSREMGTLQERITSTKQGSITSIQAVYVPADDLTDPAPATTFAHLDATTVLSRNLAAKGIYPAVDPLDSTSTMLQPWIVGEEHYGTAQRVKQTLQRYKELQDIIAILGLDELSEEDRLVVARARKIERFLSQPFFVAEVFTGSPGKYVSLADSIKGFTMILNGELDSLPEQAFYLVGNIEEAIAKAATLKE.

161-168 (GGAGVGKT) lines the ATP pocket.

The protein belongs to the ATPase alpha/beta chains family. As to quaternary structure, F-type ATPases have 2 components, CF(1) - the catalytic core - and CF(0) - the membrane proton channel. CF(1) has five subunits: alpha(3), beta(3), gamma(1), delta(1), epsilon(1). CF(0) has four main subunits: a(1), b(1), b'(1) and c(9-12).

It localises to the plastid. It is found in the chloroplast thylakoid membrane. The catalysed reaction is ATP + H2O + 4 H(+)(in) = ADP + phosphate + 5 H(+)(out). In terms of biological role, produces ATP from ADP in the presence of a proton gradient across the membrane. The catalytic sites are hosted primarily by the beta subunits. The polypeptide is ATP synthase subunit beta, chloroplastic (Mesostigma viride (Green alga)).